Reading from the N-terminus, the 439-residue chain is Alpha-1,3-mannosyl-glycoprotein 4-beta-N-acetylglucosaminyltransferase-like protein MGAT4E (439 aa).

The protein operates within protein modification; protein glycosylation. In terms of biological role, glycosyltransferase-like protein that may participate in the transfer of N-acetylglucosamine (GlcNAc) to the core mannose residues of N-linked glycans. The sequence is that of Alpha-1,3-mannosyl-glycoprotein 4-beta-N-acetylglucosaminyltransferase-like protein MGAT4E from Mus musculus (Mouse).